A 225-amino-acid chain; its full sequence is Ribose-5-phosphate isomerase A (225 aa).

Substrate contacts are provided by residues 32–35 (TGST), 85–88 (DGAD), and 98–101 (KGGG). Residue glutamate 107 is the Proton acceptor of the active site. Substrate is bound at residue lysine 125.

The protein belongs to the ribose 5-phosphate isomerase family. Homodimer.

The catalysed reaction is aldehydo-D-ribose 5-phosphate = D-ribulose 5-phosphate. The protein operates within carbohydrate degradation; pentose phosphate pathway; D-ribose 5-phosphate from D-ribulose 5-phosphate (non-oxidative stage): step 1/1. In terms of biological role, catalyzes the reversible conversion of ribose-5-phosphate to ribulose 5-phosphate. The chain is Ribose-5-phosphate isomerase A from Hahella chejuensis (strain KCTC 2396).